The following is a 345-amino-acid chain: NADH-ubiquinone oxidoreductase chain 2 (345 aa).

The next 10 membrane-spanning stretches (helical) occupy residues 3–23, 25–45, 59–79, 95–115, 148–168, 177–196, 201–223, 236–256, 273–293, and 322–342; these read PYIL…TFAS, NWLL…PLMA, YFIT…INAW, ALMT…FWLP, LMPE…GWGG, IMAY…MHFM, IINL…TLNS, FPAL…LPPL, NLAL…YFYL, and FILP…PSII.

The protein belongs to the complex I subunit 2 family.

It is found in the mitochondrion inner membrane. The catalysed reaction is a ubiquinone + NADH + 5 H(+)(in) = a ubiquinol + NAD(+) + 4 H(+)(out). Core subunit of the mitochondrial membrane respiratory chain NADH dehydrogenase (Complex I) that is believed to belong to the minimal assembly required for catalysis. Complex I functions in the transfer of electrons from NADH to the respiratory chain. The immediate electron acceptor for the enzyme is believed to be ubiquinone. This chain is NADH-ubiquinone oxidoreductase chain 2 (MT-ND2), found in Polypterus ornatipinnis (Ornate bichir).